Reading from the N-terminus, the 267-residue chain is Dichloromethane dehalogenase (267 aa).

One can recognise a GST N-terminal domain in the interval 3-85 (TKLRYLHHPA…YLSEKYDCSS (83 aa)). Residues 91 to 224 (TLEERGHIQQ…AWQYENVRKY (134 aa)) enclose the GST C-terminal domain.

Belongs to the GST superfamily. As to quaternary structure, homohexamer.

It is found in the cytoplasm. It catalyses the reaction dichloromethane + H2O = formaldehyde + 2 chloride + 2 H(+). Its pathway is xenobiotic degradation; dichloromethane degradation. The sequence is that of Dichloromethane dehalogenase (dcmA) from Methylophilus leisingeri (strain DSM 6813 / VKM B-2013 / DM11).